We begin with the raw amino-acid sequence, 167 residues long: Ion-translocating oxidoreductase complex subunit B (167 aa).

The interval 1 to 22 (MITLIIFSFLSFLLGIILSFTA) is hydrophobic. Residues 28–87 (QEDPIVEIVNELLPQSQCAQCGYSGCYPYAKAIVENSEKINKCIPGGTDLISAISSVLSI) enclose the 4Fe-4S domain. 12 residues coordinate [4Fe-4S] cluster: cysteine 45, cysteine 48, cysteine 53, cysteine 70, cysteine 113, cysteine 116, cysteine 119, cysteine 123, cysteine 143, cysteine 146, cysteine 149, and cysteine 153. 4Fe-4S ferredoxin-type domains follow at residues 104–133 (NTVLINESNCVGCSKCASFCPVDAIVGAPN) and 134–163 (FIHTVLQEFCTGCNICLLHCPTNCIEIKKE).

This sequence belongs to the 4Fe4S bacterial-type ferredoxin family. RnfB subfamily. The complex is composed of six subunits: RnfA, RnfB, RnfC, RnfD, RnfE and RnfG. The cofactor is [4Fe-4S] cluster.

It is found in the cell inner membrane. Part of a membrane-bound complex that couples electron transfer with translocation of ions across the membrane. The chain is Ion-translocating oxidoreductase complex subunit B from Buchnera aphidicola subsp. Acyrthosiphon pisum (strain Tuc7).